A 313-amino-acid polypeptide reads, in one-letter code: Porphobilinogen deaminase (313 aa).

An S-(dipyrrolylmethanemethyl)cysteine modification is found at Cys-241.

This sequence belongs to the HMBS family. As to quaternary structure, monomer. Dipyrromethane serves as cofactor.

It carries out the reaction 4 porphobilinogen + H2O = hydroxymethylbilane + 4 NH4(+). The protein operates within porphyrin-containing compound metabolism; protoporphyrin-IX biosynthesis; coproporphyrinogen-III from 5-aminolevulinate: step 2/4. It functions in the pathway porphyrin-containing compound metabolism; chlorophyll biosynthesis. Its function is as follows. Tetrapolymerization of the monopyrrole PBG into the hydroxymethylbilane pre-uroporphyrinogen in several discrete steps. In Chlorobium phaeobacteroides (strain DSM 266 / SMG 266 / 2430), this protein is Porphobilinogen deaminase.